Reading from the N-terminus, the 491-residue chain is Argininosuccinate lyase (491 aa).

It belongs to the lyase 1 family. Argininosuccinate lyase subfamily.

It is found in the cytoplasm. It carries out the reaction 2-(N(omega)-L-arginino)succinate = fumarate + L-arginine. It participates in amino-acid biosynthesis; L-arginine biosynthesis; L-arginine from L-ornithine and carbamoyl phosphate: step 3/3. The sequence is that of Argininosuccinate lyase from Methanococcoides burtonii (strain DSM 6242 / NBRC 107633 / OCM 468 / ACE-M).